Here is a 289-residue protein sequence, read N- to C-terminus: WUSCHEL-related homeobox 1 (289 aa).

Low complexity predominate over residues 1 to 11; that stretch reads MDHMQQQQRQQ. The disordered stretch occupies residues 1-34; that stretch reads MDHMQQQQRQQVGGGGGEEVAGRGGVPVCRPSGT. Residues 12–25 are compositionally biased toward gly residues; it reads VGGGGGEEVAGRGG. The homeobox; WUS-type DNA-binding region spans 31-96; sequence PSGTRWTPTT…NHKARERQKK (66 aa).

This sequence belongs to the WUS homeobox family. In terms of assembly, interacts with TPR1, TPR2 and TPR3. Expressed in young leaf primordia. Expressed in branch an floral meristems. Transiently expressed in the shoot apex.

The protein localises to the nucleus. Functionally, transcription repressor required for the formation and development of tiller buds and panicles. Required for tiller formation and female sterility. Required for the early developmental stages of axillary meristem formation. Plays a role in maintaining the axillary premeristem zone and in promoting the formation of the axillary meristem by promoting OSH1 expression. Does not seem to be involved in maintenance of the shoot apical meristem (SAM). This Oryza sativa subsp. japonica (Rice) protein is WUSCHEL-related homeobox 1.